Reading from the N-terminus, the 86-residue chain is Large ribosomal subunit protein bL28 (86 aa).

This sequence belongs to the bacterial ribosomal protein bL28 family.

This is Large ribosomal subunit protein bL28 from Phocaeicola vulgatus (strain ATCC 8482 / DSM 1447 / JCM 5826 / CCUG 4940 / NBRC 14291 / NCTC 11154) (Bacteroides vulgatus).